Reading from the N-terminus, the 479-residue chain is GTPase Obg (479 aa).

The region spanning threonine 2 to valine 159 is the Obg domain. The segment at histidine 61–leucine 87 is disordered. An OBG-type G domain is found at alanine 160–glycine 331. Residues glycine 166 to serine 173, phenylalanine 191 to valine 195, aspartate 212 to glycine 215, asparagine 283 to aspartate 286, and serine 312 to valine 314 each bind GTP. Mg(2+)-binding residues include serine 173 and threonine 193. One can recognise an OCT domain in the interval proline 349–proline 431. A compositionally biased stretch (basic and acidic residues) spans leucine 440–arginine 453. The tract at residues leucine 440–phenylalanine 479 is disordered. The span at glutamate 470–phenylalanine 479 shows a compositional bias: acidic residues.

The protein belongs to the TRAFAC class OBG-HflX-like GTPase superfamily. OBG GTPase family. As to quaternary structure, monomer. Mg(2+) serves as cofactor.

It localises to the cytoplasm. In terms of biological role, an essential GTPase which binds GTP, GDP and possibly (p)ppGpp with moderate affinity, with high nucleotide exchange rates and a fairly low GTP hydrolysis rate. Plays a role in control of the cell cycle, stress response, ribosome biogenesis and in those bacteria that undergo differentiation, in morphogenesis control. The polypeptide is GTPase Obg (Streptomyces avermitilis (strain ATCC 31267 / DSM 46492 / JCM 5070 / NBRC 14893 / NCIMB 12804 / NRRL 8165 / MA-4680)).